A 243-amino-acid polypeptide reads, in one-letter code: Carboxy-S-adenosyl-L-methionine synthase (243 aa).

S-adenosyl-L-methionine-binding positions include tyrosine 40, 65-67 (GCS), 90-91 (DN), 118-119 (DI), asparagine 133, and arginine 200.

The protein belongs to the class I-like SAM-binding methyltransferase superfamily. Cx-SAM synthase family. As to quaternary structure, homodimer.

The enzyme catalyses prephenate + S-adenosyl-L-methionine = carboxy-S-adenosyl-L-methionine + 3-phenylpyruvate + H2O. Catalyzes the conversion of S-adenosyl-L-methionine (SAM) to carboxy-S-adenosyl-L-methionine (Cx-SAM). This is Carboxy-S-adenosyl-L-methionine synthase from Shewanella amazonensis (strain ATCC BAA-1098 / SB2B).